We begin with the raw amino-acid sequence, 111 residues long: Photosystem II reaction center Psb28 protein (111 aa).

This sequence belongs to the Psb28 family. As to quaternary structure, part of the photosystem II complex.

It localises to the cellular thylakoid membrane. The protein is Photosystem II reaction center Psb28 protein of Acaryochloris marina (strain MBIC 11017).